Consider the following 423-residue polypeptide: Proline racemase A (423 aa).

An N-terminal signal peptide occupies residues 1 to 31 (MRKSVCPKQKFFFSAFPFFFFFCVFPLISRT). Residue Cys160 is the Proton acceptor of the active site. 161 to 162 (GH) serves as a coordination point for substrate. N-linked (GlcNAc...) asparagine glycosylation is found at Asn213, Asn266, and Asn282. Asp326 is a binding site for substrate. The active-site Proton donor is Cys330. 331–332 (GT) contacts substrate.

The protein belongs to the proline racemase family. Homodimer.

It is found in the secreted. Its subcellular location is the membrane. The protein resides in the cytoplasm. It carries out the reaction L-proline = D-proline. Its activity is regulated as follows. Inhibited by maleic acid, iodoacetamide, iodoacetate and, most particularly, pyrrole-2-carboxylic acid. Its function is as follows. Catalyzes the interconversion of L- and D-proline. Secreted isoform 1 contributes to parasite immune evasion by acting as a B-cell mitogen. Probably involved in parasite differentiation and infectivity. This Trypanosoma cruzi (strain CL Brener) protein is Proline racemase A (PA45-A).